The primary structure comprises 136 residues: Large-conductance mechanosensitive channel (136 aa).

The next 4 membrane-spanning stretches (helical) occupy residues 9-29 (AFAS…GAAF), 32-52 (IVSS…LGGV), 54-74 (FSDL…VVIA), and 79-99 (IQTV…LKAI).

This sequence belongs to the MscL family. In terms of assembly, homopentamer.

It is found in the cell inner membrane. In terms of biological role, channel that opens in response to stretch forces in the membrane lipid bilayer. May participate in the regulation of osmotic pressure changes within the cell. In Shewanella oneidensis (strain ATCC 700550 / JCM 31522 / CIP 106686 / LMG 19005 / NCIMB 14063 / MR-1), this protein is Large-conductance mechanosensitive channel.